We begin with the raw amino-acid sequence, 493 residues long: E3 ubiquitin-protein ligase Hakai (493 aa).

2 disordered regions span residues 1-20 (MDHN…LGGL) and 28-61 (IKLI…GDEE). Polar residues predominate over residues 7 to 16 (DLQGTNSSAS). An RING-type zinc finger spans residues 109-149 (CDKCGLPIKMYGRMIPCKHVFCYDCAILHEKKGDKMCPGCN). The interval 148–206 (CNEPVQRIEQCVRGSLFMCSIVQGCKRTYLSQRDLQAHINHRHMRAGKPVTRPPLEPVH) is HYB domain. Residues 164 to 190 (FMCSIVQGCKRTYLSQRDLQAHINHRH) form a C2H2-type zinc finger. Residues 253-493 (YNQPHEDIRP…DQARYRPYYQ (241 aa)) are disordered. 4 stretches are compositionally biased toward pro residues: residues 262-276 (PPPA…PPRP), 342-352 (APPPPPPPPIS), 372-389 (APPP…PPPG), and 399-412 (MNHP…PQHG). A compositionally biased stretch (polar residues) spans 427–444 (NPNSLPQFSEDQGTLSPP). The segment covering 459–469 (PRGPPPPPRMQ) has biased composition (pro residues). Low complexity predominate over residues 470–480 (GPPAQAPLAGP).

It belongs to the Hakai family. As to quaternary structure, homodimer. Interacts with tyrosine-phosphorylated SRC substrates. Component of the WMM complex, a N6-methyltransferase complex composed of a catalytic subcomplex, named MAC, and of an associated subcomplex, named MACOM. Component of the MACOM subcomplex.

Its subcellular location is the nucleus speckle. The protein localises to the nucleus. It localises to the nucleoplasm. It carries out the reaction S-ubiquitinyl-[E2 ubiquitin-conjugating enzyme]-L-cysteine + [acceptor protein]-L-lysine = [E2 ubiquitin-conjugating enzyme]-L-cysteine + N(6)-ubiquitinyl-[acceptor protein]-L-lysine.. It participates in protein modification; protein ubiquitination. Its function is as follows. E3 ubiquitin-protein ligase that mediates ubiquitination of several tyrosine-phosphorylated Src substrates. Associated component of the WMM complex, a complex that mediates N6-methyladenosine (m6A) methylation of RNAs, a modification that plays a role in the efficiency of mRNA splicing and RNA processing. This chain is E3 ubiquitin-protein ligase Hakai, found in Gallus gallus (Chicken).